We begin with the raw amino-acid sequence, 541 residues long: Chaperonin GroEL (541 aa).

ATP contacts are provided by residues 30–33, lysine 51, 87–91, glycine 415, and aspartate 495; these read TLGP and DGTTT.

Belongs to the chaperonin (HSP60) family. In terms of assembly, forms a cylinder of 14 subunits composed of two heptameric rings stacked back-to-back. Interacts with the co-chaperonin GroES.

The protein localises to the cytoplasm. It catalyses the reaction ATP + H2O + a folded polypeptide = ADP + phosphate + an unfolded polypeptide.. Together with its co-chaperonin GroES, plays an essential role in assisting protein folding. The GroEL-GroES system forms a nano-cage that allows encapsulation of the non-native substrate proteins and provides a physical environment optimized to promote and accelerate protein folding. The protein is Chaperonin GroEL of Pantoea ananas (Erwinia uredovora).